Reading from the N-terminus, the 79-residue chain is Acyl carrier protein (79 aa).

A Carrier domain is found at 2–79 (ASKEEILAGL…QDAVDFIXGA (78 aa)). At Ser40 the chain carries O-(pantetheine 4'-phosphoryl)serine.

The protein belongs to the acyl carrier protein (ACP) family. Post-translationally, 4'-phosphopantetheine is transferred from CoA to a specific serine of apo-ACP by AcpS. This modification is essential for activity because fatty acids are bound in thioester linkage to the sulfhydryl of the prosthetic group.

It localises to the cytoplasm. It functions in the pathway lipid metabolism; fatty acid biosynthesis. In terms of biological role, carrier of the growing fatty acid chain in fatty acid biosynthesis. In Myxococcus xanthus, this protein is Acyl carrier protein.